The chain runs to 34 residues: Photosystem II reaction center protein Psb30 (34 aa).

Residues 6–26 (VIGQLIATGAIMLAGPAVIVL) traverse the membrane as a helical segment.

This sequence belongs to the Psb30/Ycf12 family. In terms of assembly, PSII is composed of 1 copy each of membrane proteins PsbA, PsbB, PsbC, PsbD, PsbE, PsbF, PsbH, PsbI, PsbJ, PsbK, PsbL, PsbM, PsbT, PsbX, PsbY, PsbZ, Psb30/Ycf12, peripheral proteins of the oxygen-evolving complex and a large number of cofactors. It forms dimeric complexes.

The protein resides in the plastid. It localises to the chloroplast thylakoid membrane. A core subunit of photosystem II (PSII), probably helps stabilize the reaction center. The sequence is that of Photosystem II reaction center protein Psb30 from Trieres chinensis (Marine centric diatom).